Here is a 36-residue protein sequence, read N- to C-terminus: Delta-amaurobitoxin-Pl1c (36 aa).

4 cysteine pairs are disulfide-bonded: Cys3-Cys19, Cys10-Cys24, Cys18-Cys34, and Cys26-Cys32.

In terms of tissue distribution, expressed by the venom gland.

The protein localises to the secreted. Binds at site 4 of sodium channels (Nav) and inhibits the fast inactivation of cockroach channels. This toxin is active only on insects. Has a potent activity against S.litura larvae. This is Delta-amaurobitoxin-Pl1c from Pireneitega luctuosa (Tangled nest spider).